A 486-amino-acid chain; its full sequence is Probable glycine dehydrogenase (decarboxylating) subunit 2 (486 aa).

The residue at position 273 (K273) is an N6-(pyridoxal phosphate)lysine.

The protein belongs to the GcvP family. C-terminal subunit subfamily. In terms of assembly, the glycine cleavage system is composed of four proteins: P, T, L and H. In this organism, the P 'protein' is a heterodimer of two subunits. Requires pyridoxal 5'-phosphate as cofactor.

It catalyses the reaction N(6)-[(R)-lipoyl]-L-lysyl-[glycine-cleavage complex H protein] + glycine + H(+) = N(6)-[(R)-S(8)-aminomethyldihydrolipoyl]-L-lysyl-[glycine-cleavage complex H protein] + CO2. Its function is as follows. The glycine cleavage system catalyzes the degradation of glycine. The P protein binds the alpha-amino group of glycine through its pyridoxal phosphate cofactor; CO(2) is released and the remaining methylamine moiety is then transferred to the lipoamide cofactor of the H protein. The protein is Probable glycine dehydrogenase (decarboxylating) subunit 2 of Alkaliphilus oremlandii (strain OhILAs) (Clostridium oremlandii (strain OhILAs)).